A 160-amino-acid polypeptide reads, in one-letter code: Protein D14 (160 aa).

The chain is Protein D14 (D14) from Escherichia phage T5 (Enterobacteria phage T5).